We begin with the raw amino-acid sequence, 222 residues long: Adenylate kinase (222 aa).

10–15 provides a ligand contact to ATP; that stretch reads GAGKGT. The NMP stretch occupies residues 30–59; sequence STGDMLRAAVKAGTPLGIEAKKVMDAGGLV. AMP contacts are provided by residues T31, R36, 57 to 59, 85 to 88, and Q92; these read GLV and GFPR. Residues 122–159 form an LID region; it reads GRRVHVASGRTYHVKYNPPKTEGVDDESGEPLIQRDDD. ATP-binding positions include R123 and 132–133; that span reads TY. Residues 138 to 160 are disordered; sequence NPPKTEGVDDESGEPLIQRDDDK. Residues R156 and R167 each coordinate AMP. ATP is bound at residue G207.

It belongs to the adenylate kinase family. As to quaternary structure, monomer.

It localises to the cytoplasm. It catalyses the reaction AMP + ATP = 2 ADP. The protein operates within purine metabolism; AMP biosynthesis via salvage pathway; AMP from ADP: step 1/1. Its function is as follows. Catalyzes the reversible transfer of the terminal phosphate group between ATP and AMP. Plays an important role in cellular energy homeostasis and in adenine nucleotide metabolism. This is Adenylate kinase from Ralstonia pickettii (strain 12J).